The primary structure comprises 265 residues: V0 assembly protein 1 (265 aa).

An N-terminal signal peptide occupies residues 1–24; the sequence is MVFGQLYALFIFTLSCCISKTVQA. The Vacuolar segment spans residues 25–223; that stretch reads DSSKESSSFI…ILSSIWTEGL (199 aa). N-linked (GlcNAc...) asparagine glycosylation is found at N69, N104, and N172. A helical membrane pass occupies residues 224-244; sequence LMCLIVSALLLFILIVALSWI. Residues 245–265 are Cytoplasmic-facing; sequence SNLDITYGALEKSTNPIKKNN. Positions 262-265 match the ER retention motif motif; it reads KKNN.

The protein belongs to the VOA1 family. In terms of assembly, V-ATPase is a heteromultimeric enzyme composed of a peripheral catalytic V1 complex (components A to H) attached to an integral membrane V0 proton pore complex (components: a, c, c', c'', d, e, f and VOA1). Interacts with VMA21. Associates with the assembling V0 complex.

The protein resides in the vacuole membrane. It is found in the endoplasmic reticulum membrane. In terms of biological role, accessory component of the V0 complex of vacuolar(H+)-ATPase (V-ATPase), a multisubunit enzyme composed of a peripheral complex (V1) that hydrolyzes ATP and a membrane integral complex (V0) that translocates protons. V-ATPase is responsible for acidifying and maintaining the pH of intracellular compartments. Functions with VMA21 in assembly of the V0 complex. In Saccharomyces cerevisiae (strain ATCC 204508 / S288c) (Baker's yeast), this protein is V0 assembly protein 1 (VOA1).